A 669-amino-acid polypeptide reads, in one-letter code: UvrABC system protein B (669 aa).

The region spanning 26–183 is the Helicase ATP-binding domain; it reads TNFHAGIAKQ…RHLTELQYTR (158 aa). 39–46 contacts ATP; that stretch reads GVTGSGKT. A Beta-hairpin motif is present at residues 92–115; the sequence is YYDYYQPEAYVPASDTFIEKDSSI. The region spanning 431–597 is the Helicase C-terminal domain; it reads QVDDLISQIN…SVVRPISDIL (167 aa). Positions 631–666 constitute a UVR domain; that stretch reads AAQMKVLEQKMYQHARDLEFEDAARIRDQIQRLREA.

Belongs to the UvrB family. As to quaternary structure, forms a heterotetramer with UvrA during the search for lesions. Interacts with UvrC in an incision complex.

The protein localises to the cytoplasm. The UvrABC repair system catalyzes the recognition and processing of DNA lesions. A damage recognition complex composed of 2 UvrA and 2 UvrB subunits scans DNA for abnormalities. Upon binding of the UvrA(2)B(2) complex to a putative damaged site, the DNA wraps around one UvrB monomer. DNA wrap is dependent on ATP binding by UvrB and probably causes local melting of the DNA helix, facilitating insertion of UvrB beta-hairpin between the DNA strands. Then UvrB probes one DNA strand for the presence of a lesion. If a lesion is found the UvrA subunits dissociate and the UvrB-DNA preincision complex is formed. This complex is subsequently bound by UvrC and the second UvrB is released. If no lesion is found, the DNA wraps around the other UvrB subunit that will check the other stand for damage. The protein is UvrABC system protein B of Xylella fastidiosa (strain M23).